Here is a 363-residue protein sequence, read N- to C-terminus: Chorismate synthase (363 aa).

Positions aspartate 44 to aspartate 63 are disordered. 2 residues coordinate NADP(+): arginine 48 and arginine 54. FMN-binding positions include arginine 125–serine 127, asparagine 237–alanine 238, glycine 277, lysine 292–serine 296, and arginine 318.

It belongs to the chorismate synthase family. Homotetramer. The cofactor is FMNH2.

It catalyses the reaction 5-O-(1-carboxyvinyl)-3-phosphoshikimate = chorismate + phosphate. It participates in metabolic intermediate biosynthesis; chorismate biosynthesis; chorismate from D-erythrose 4-phosphate and phosphoenolpyruvate: step 7/7. Functionally, catalyzes the anti-1,4-elimination of the C-3 phosphate and the C-6 proR hydrogen from 5-enolpyruvylshikimate-3-phosphate (EPSP) to yield chorismate, which is the branch point compound that serves as the starting substrate for the three terminal pathways of aromatic amino acid biosynthesis. This reaction introduces a second double bond into the aromatic ring system. In Pseudomonas fluorescens (strain ATCC BAA-477 / NRRL B-23932 / Pf-5), this protein is Chorismate synthase.